The sequence spans 152 residues: Small ribosomal subunit protein uS8m (152 aa).

It belongs to the universal ribosomal protein uS8 family.

The protein localises to the mitochondrion. This chain is Small ribosomal subunit protein uS8m (RPS8), found in Marchantia polymorpha (Common liverwort).